Consider the following 362-residue polypeptide: Molybdopterin synthase catalytic subunit (362 aa).

Substrate is bound by residues 101-102 (HR), Lys-117, and 124-126 (KKE).

Belongs to the MoaE family. MOCS2B subfamily. Heterotetramer; composed of 2 small (Mocs2A) and 2 large (Mocs2B) subunits.

Its subcellular location is the cytoplasm. The catalysed reaction is 2 [molybdopterin-synthase sulfur-carrier protein]-C-terminal-Gly-aminoethanethioate + cyclic pyranopterin phosphate + H2O = molybdopterin + 2 [molybdopterin-synthase sulfur-carrier protein]-C-terminal Gly-Gly + 2 H(+). It functions in the pathway cofactor biosynthesis; molybdopterin biosynthesis. Catalytic subunit of the molybdopterin synthase complex, a complex that catalyzes the conversion of precursor Z into molybdopterin. Acts by mediating the incorporation of 2 sulfur atoms from thiocarboxylated Mocs2A into precursor Z to generate a dithiolene group. The polypeptide is Molybdopterin synthase catalytic subunit (Drosophila grimshawi (Hawaiian fruit fly)).